We begin with the raw amino-acid sequence, 385 residues long: Anhydro-N-acetylmuramic acid kinase (385 aa).

12-19 (GTSLDGID) provides a ligand contact to ATP.

The protein belongs to the anhydro-N-acetylmuramic acid kinase family.

The enzyme catalyses 1,6-anhydro-N-acetyl-beta-muramate + ATP + H2O = N-acetyl-D-muramate 6-phosphate + ADP + H(+). It functions in the pathway amino-sugar metabolism; 1,6-anhydro-N-acetylmuramate degradation. Its pathway is cell wall biogenesis; peptidoglycan recycling. Functionally, catalyzes the specific phosphorylation of 1,6-anhydro-N-acetylmuramic acid (anhMurNAc) with the simultaneous cleavage of the 1,6-anhydro ring, generating MurNAc-6-P. Is required for the utilization of anhMurNAc either imported from the medium or derived from its own cell wall murein, and thus plays a role in cell wall recycling. This is Anhydro-N-acetylmuramic acid kinase from Bacillus thuringiensis (strain Al Hakam).